A 34-amino-acid chain; its full sequence is Mu-theraphotoxin-Df1a (34 aa).

Intrachain disulfides connect Cys2–Cys16, Cys9–Cys21, and Cys15–Cys28. Position 34 is a phenylalanine amide (Phe34).

It belongs to the neurotoxin 10 (Hwtx-1) family. 54 (ProTx-1) subfamily. Post-translationally, C-terminal amidation is important for the high potency of the toxin. In terms of tissue distribution, expressed by the venom gland.

It localises to the secreted. Its function is as follows. Inhibits sodium channel Nav1.7/SCN9A with high potency (IC(50)=117 nM) and Nav1.2/SCN2A, Nav1.3/SCN3A, Nav1.6/SCN8A and Nav1.5/SCN5 with weaker potency. Also inhibits voltage-gated calcium channel Cav3.1/CACNA1G, Cav3.2/CACNA1H and Cav3.3/CACNA1I. The sequence is that of Mu-theraphotoxin-Df1a from Davus fasciatus (Costa Rican tiger rump).